A 57-amino-acid polypeptide reads, in one-letter code: Major exported protein (57 aa).

It belongs to the hcp1 family. Homodimer.

Its subcellular location is the secreted. The protein is Major exported protein of Pseudomonas syringae pv. ribicola.